Consider the following 169-residue polypeptide: S-ribosylhomocysteine lyase (169 aa).

Fe cation is bound by residues histidine 54, histidine 58, and cysteine 128.

The protein belongs to the LuxS family. In terms of assembly, homodimer. Fe cation is required as a cofactor.

It carries out the reaction S-(5-deoxy-D-ribos-5-yl)-L-homocysteine = (S)-4,5-dihydroxypentane-2,3-dione + L-homocysteine. Functionally, involved in the synthesis of autoinducer 2 (AI-2) which is secreted by bacteria and is used to communicate both the cell density and the metabolic potential of the environment. The regulation of gene expression in response to changes in cell density is called quorum sensing. Catalyzes the transformation of S-ribosylhomocysteine (RHC) to homocysteine (HC) and 4,5-dihydroxy-2,3-pentadione (DPD). This chain is S-ribosylhomocysteine lyase, found in Shewanella piezotolerans (strain WP3 / JCM 13877).